The sequence spans 431 residues: Keratin, type I cytoskeletal 18 (431 aa).

The segment at 2-83 is head; it reads SLRTSYSVRS…SGSTGEIMGN (82 aa). Serine 12 carries the phosphoserine modification. Threonine 13 is modified (phosphothreonine). Phosphoserine is present on residues serine 22 and serine 36. Residues 84 to 119 form a coil 1A region; it reads EKMAMQNLNDRLASYLEKVRILEQANSKLELKIREA. One can recognise an IF rod domain in the interval 84–395; it reads EKMAMQNLND…RLLDGGDFKL (312 aa). Residues 120–136 are linker 1; sequence LEKRGPDVHDYSRFQPI. Positions 137-228 are coil 1B; the sequence is VDELRKKIFD…KNHDNEVMEL (92 aa). Positions 229 to 252 are linker 12; the sequence is RNQISQSGVQVDVDAPKGQDLSQI. Residues 253–390 form a coil 2 region; it reads MEEIRAKYEK…IATYRRLLDG (138 aa). The segment at 391 to 431 is tail; the sequence is GDFKLQDALEEQKKVKVMTVTQTLVDGKVVSSSTETKERKL.

Belongs to the intermediate filament family. As to quaternary structure, heterotetramer of two type I and two type II keratins. Keratin-18 associates with keratin-8. In terms of processing, proteolytically cleaved by caspases during epithelial cell apoptosis. In terms of tissue distribution, expressed in simple epithelia such as intestinal mucosa, bile duct, hepatocytes, renal tubules, endothelia, ocular lens epithelium, and in a variety of mesenchymally-derived cells such as blood vessel endothelia, pillar gill cells, optic nerve glial cells, fibroblasts, interstitial cells, chondrocytes and ovarian theca cells. Also expressed in epidermis, pharyngeal mucosa, mucosa of anterior esophagus, gill mucosa and cornea.

In terms of biological role, when phosphorylated, plays a role in filament reorganization. The protein is Keratin, type I cytoskeletal 18 of Danio rerio (Zebrafish).